We begin with the raw amino-acid sequence, 320 residues long: o-succinylbenzoate synthase (320 aa).

Catalysis depends on Lys-133, which acts as the Proton donor. The Mg(2+) site is built by Asp-161, Glu-190, and Asp-213. Lys-235 functions as the Proton acceptor in the catalytic mechanism.

Belongs to the mandelate racemase/muconate lactonizing enzyme family. MenC type 1 subfamily. It depends on a divalent metal cation as a cofactor.

It carries out the reaction (1R,6R)-6-hydroxy-2-succinyl-cyclohexa-2,4-diene-1-carboxylate = 2-succinylbenzoate + H2O. Its pathway is quinol/quinone metabolism; 1,4-dihydroxy-2-naphthoate biosynthesis; 1,4-dihydroxy-2-naphthoate from chorismate: step 4/7. The protein operates within quinol/quinone metabolism; menaquinone biosynthesis. In terms of biological role, converts 2-succinyl-6-hydroxy-2,4-cyclohexadiene-1-carboxylate (SHCHC) to 2-succinylbenzoate (OSB). The protein is o-succinylbenzoate synthase of Escherichia coli O7:K1 (strain IAI39 / ExPEC).